We begin with the raw amino-acid sequence, 340 residues long: Probable quinone oxidoreductase (340 aa).

It belongs to the zinc-containing alcohol dehydrogenase family. Quinone oxidoreductase subfamily.

The enzyme catalyses 2 a quinone + NADPH + H(+) = 2 a 1,4-benzosemiquinone + NADP(+). The sequence is that of Probable quinone oxidoreductase from Leishmania amazonensis.